The primary structure comprises 406 residues: Pyruvate dehydrogenase E1 component subunit beta-3, chloroplastic (406 aa).

Residues 1–70 constitute a chloroplast transit peptide; it reads MSAILQGAGA…PLIPNAVTTK (70 aa). Glu142 provides a ligand contact to thiamine diphosphate. Residues Val195, Ala243, Ile244, and Asn248 each coordinate K(+).

Tetramer of 2 alpha and 2 beta subunits. Thiamine diphosphate is required as a cofactor.

The protein localises to the plastid. The protein resides in the chloroplast. The catalysed reaction is N(6)-[(R)-lipoyl]-L-lysyl-[protein] + pyruvate + H(+) = N(6)-[(R)-S(8)-acetyldihydrolipoyl]-L-lysyl-[protein] + CO2. The pyruvate dehydrogenase complex catalyzes the overall conversion of pyruvate to acetyl-CoA and CO(2). It contains multiple copies of three enzymatic components: pyruvate dehydrogenase (E1), dihydrolipoamide acetyltransferase (E2) and lipoamide dehydrogenase (E3). This is Pyruvate dehydrogenase E1 component subunit beta-3, chloroplastic (E1-BETA-2) from Arabidopsis thaliana (Mouse-ear cress).